We begin with the raw amino-acid sequence, 326 residues long: Phospho-N-acetylmuramoyl-pentapeptide-transferase (326 aa).

Helical transmembrane passes span 3 to 23, 51 to 71, 77 to 97, 113 to 133, 143 to 163, 175 to 195, 199 to 219, 225 to 245, 250 to 270, and 306 to 326; these read LPTK…PYFI, TPTM…LFWV, ILLL…DDYL, ILIQ…YFTE, GIMI…VVGS, GLAA…AYMT, ISVI…LWFN, IFMG…TSVL, VLFA…VIQV, and IVIK…AFLL.

The protein belongs to the glycosyltransferase 4 family. MraY subfamily. Mg(2+) is required as a cofactor.

Its subcellular location is the cell membrane. The catalysed reaction is UDP-N-acetyl-alpha-D-muramoyl-L-alanyl-gamma-D-glutamyl-meso-2,6-diaminopimeloyl-D-alanyl-D-alanine + di-trans,octa-cis-undecaprenyl phosphate = di-trans,octa-cis-undecaprenyl diphospho-N-acetyl-alpha-D-muramoyl-L-alanyl-D-glutamyl-meso-2,6-diaminopimeloyl-D-alanyl-D-alanine + UMP. The protein operates within cell wall biogenesis; peptidoglycan biosynthesis. Its function is as follows. Catalyzes the initial step of the lipid cycle reactions in the biosynthesis of the cell wall peptidoglycan: transfers peptidoglycan precursor phospho-MurNAc-pentapeptide from UDP-MurNAc-pentapeptide onto the lipid carrier undecaprenyl phosphate, yielding undecaprenyl-pyrophosphoryl-MurNAc-pentapeptide, known as lipid I. This chain is Phospho-N-acetylmuramoyl-pentapeptide-transferase, found in Wolbachia sp. subsp. Brugia malayi (strain TRS).